A 310-amino-acid polypeptide reads, in one-letter code: Malate dehydrogenase (310 aa).

Residues Gly-7 to Gly-12 and Asp-32 each bind NAD(+). Substrate-binding residues include Arg-81 and Arg-87. NAD(+)-binding positions include Asn-94 and Val-117–Asn-119. 2 residues coordinate substrate: Asn-119 and Arg-150. Residue His-174 is the Proton acceptor of the active site.

It belongs to the LDH/MDH superfamily. MDH type 3 family.

The catalysed reaction is (S)-malate + NAD(+) = oxaloacetate + NADH + H(+). In terms of biological role, catalyzes the reversible oxidation of malate to oxaloacetate. The protein is Malate dehydrogenase of Chloroherpeton thalassium (strain ATCC 35110 / GB-78).